The chain runs to 341 residues: Ketol-acid reductoisomerase (NADP(+)) (341 aa).

The KARI N-terminal Rossmann domain maps to 1–182 (MTEMFYDDDA…GGTRAGVIKT (182 aa)). NADP(+)-binding positions include 25-28 (YGSQ), K48, S51, S53, and 83-86 (DQHQ). The active site involves H108. G134 lines the NADP(+) pocket. The KARI C-terminal knotted domain occupies 183–328 (TFTEETETDL…RELRSLFSWQ (146 aa)). Residues D191, E195, E227, and E231 each coordinate Mg(2+). Residue S252 participates in substrate binding.

Belongs to the ketol-acid reductoisomerase family. The cofactor is Mg(2+).

The catalysed reaction is (2R)-2,3-dihydroxy-3-methylbutanoate + NADP(+) = (2S)-2-acetolactate + NADPH + H(+). It carries out the reaction (2R,3R)-2,3-dihydroxy-3-methylpentanoate + NADP(+) = (S)-2-ethyl-2-hydroxy-3-oxobutanoate + NADPH + H(+). The protein operates within amino-acid biosynthesis; L-isoleucine biosynthesis; L-isoleucine from 2-oxobutanoate: step 2/4. It functions in the pathway amino-acid biosynthesis; L-valine biosynthesis; L-valine from pyruvate: step 2/4. Its function is as follows. Involved in the biosynthesis of branched-chain amino acids (BCAA). Catalyzes an alkyl-migration followed by a ketol-acid reduction of (S)-2-acetolactate (S2AL) to yield (R)-2,3-dihydroxy-isovalerate. In the isomerase reaction, S2AL is rearranged via a Mg-dependent methyl migration to produce 3-hydroxy-3-methyl-2-ketobutyrate (HMKB). In the reductase reaction, this 2-ketoacid undergoes a metal-dependent reduction by NADPH to yield (R)-2,3-dihydroxy-isovalerate. In Pseudarthrobacter chlorophenolicus (strain ATCC 700700 / DSM 12829 / CIP 107037 / JCM 12360 / KCTC 9906 / NCIMB 13794 / A6) (Arthrobacter chlorophenolicus), this protein is Ketol-acid reductoisomerase (NADP(+)).